Here is a 217-residue protein sequence, read N- to C-terminus: Probable glutathione S-transferase DHAR4 (217 aa).

Positions 8 and 19 each coordinate glutathione. L-ascorbate is bound by residues Lys8 and Asp19. Residues 10–85 (ASGAPDVLGD…DLIVGIIEEK (76 aa)) form the GST N-terminal domain. Cys20 acts as the Nucleophile in catalysis. The Glutathione-binding motif lies at 20 to 25 (CPFGQR). Glutathione is bound by residues Lys47, Ser75, His164, and Trp211. In terms of domain architecture, GST C-terminal spans 86 to 217 (YPEPSLVTFP…IASWAPKLDV (132 aa)). Residue Lys214 participates in L-ascorbate binding.

Belongs to the GST superfamily. DHAR family. In terms of assembly, monomer.

It localises to the cytoplasm. The protein resides in the cytosol. It carries out the reaction RX + glutathione = an S-substituted glutathione + a halide anion + H(+). It catalyses the reaction L-dehydroascorbate + 2 glutathione = glutathione disulfide + L-ascorbate. In terms of biological role, exhibits glutathione-dependent thiol transferase and dehydroascorbate (DHA) reductase activities. This chain is Probable glutathione S-transferase DHAR4 (DHAR4), found in Arabidopsis thaliana (Mouse-ear cress).